The primary structure comprises 108 residues: Insulin (108 aa).

The first 21 residues, 1–21 (MAVWIQAGALLFLLAVSSVNA), serve as a signal peptide directing secretion. Cystine bridges form between Cys-30–Cys-94, Cys-42–Cys-107, and Cys-93–Cys-98. Residues 54 to 85 (DVDPPLGFLPPKSAQETEVADFAFKDHAEVIR) constitute a propeptide, c peptide.

It belongs to the insulin family. As to quaternary structure, heterodimer of a B chain and an A chain linked by two disulfide bonds.

The protein resides in the secreted. In terms of biological role, insulin decreases blood glucose concentration. It increases cell permeability to monosaccharides, amino acids and fatty acids. It accelerates glycolysis, the pentose phosphate cycle, and glycogen synthesis in liver. The protein is Insulin (ins) of Cyprinus carpio (Common carp).